A 456-amino-acid polypeptide reads, in one-letter code: Acyl-CoA transferase FPSE_08120 (456 aa).

Residues 1-33 (MARLLFSGQRLRPSFLRSYIRANPSSTPSATRA) constitute a mitochondrion transit peptide.

Belongs to the CoA-transferase III family.

It localises to the mitochondrion. In terms of biological role, acyl-CoA transferase; part of the Fusarium detoxification of benzoxazolinone cluster involved in the degradation of benzoxazolinones produced by the host plant. Maize, wheat, and rye produce the 2 benzoxazinone phytoanticipins 2,4-dihy-droxy-7-methoxy-1,4-benzoxazin-3-one (DIMBOA) and 2,4-dihydroxy-1,4-benzoxazin-3-one (DIBOA) that, due to their inherent instability once released, spontaneously degrade to the more stable corresponding benzoxazolinones, 6-methoxy-2-benzoxazolinone (MBOA) and 2-benzoxazolinone (BOA), respectively. The first step in the detoxification of benzoxazolinones involves the hydrolysis of the cyclic ester bond of benzoxazolinones by the gamma-lactamase FDB1 to aminophenols. FDB1 is able to convert 2-benzoxazolinone (BOA) into 2-aminophenol (2-AP), as well as 6-methoxy-2-benzoxazolinone (MBOA) into 5-methoxy-2-aminophenol (2-AMP). The N-malonyltransferase FDB2 then metabolizes aminophenols via N-malonylation to non-toxic malonamic acids. FDB2 converts 2-AP into N-(2-hydroxyphenyl) malonamic acid (HPMA) and 2-AMP into N-(2-hydroxy-4-methoxyphenyl) malonamic acid (HMPMA). The cluster also contains 2 transcription factors (FDB3 and FPSE_08121), an aldo-keto reductase (FPSE_08125) that possibly associates with a ketone component of BOA and MBOA degradation, an esterase (FPSE_08126), an acyl-CoA transferase (FPSE_08120), a solute carrier protein (FPSE_08119) and a transmembrane transporter (FPSE_08127) proposed to shuttle metabolites of benzoxazolinone degradation. In Fusarium pseudograminearum (strain CS3096) (Wheat and barley crown-rot fungus), this protein is Acyl-CoA transferase FPSE_08120.